The chain runs to 500 residues: Lysine--tRNA ligase (500 aa).

The Mg(2+) site is built by Glu-410 and Glu-417.

It belongs to the class-II aminoacyl-tRNA synthetase family. As to quaternary structure, homodimer. The cofactor is Mg(2+).

The protein localises to the cytoplasm. The catalysed reaction is tRNA(Lys) + L-lysine + ATP = L-lysyl-tRNA(Lys) + AMP + diphosphate. In Shewanella sp. (strain ANA-3), this protein is Lysine--tRNA ligase.